We begin with the raw amino-acid sequence, 24 residues long: Brevinin-1Bd (24 aa).

A disulfide bridge links Cys18 with Cys24.

As to expression, expressed by the skin glands.

It is found in the secreted. Antibacterial activity against Gram-positive bacterium S.aureus and Gram-negative bacterium E.coli. Has activity against C.albicans. This is Brevinin-1Bd from Lithobates berlandieri (Rio Grande leopard frog).